The following is a 129-amino-acid chain: Follitropin subunit beta (129 aa).

An N-terminal signal peptide occupies residues 1–20 (MKTVQFCFLFCCWKAICCNS). 6 disulfides stabilise this stretch: Cys-21/Cys-69, Cys-35/Cys-84, Cys-38/Cys-122, Cys-46/Cys-100, Cys-50/Cys-102, and Cys-105/Cys-112. 2 N-linked (GlcNAc...) asparagine glycosylation sites follow: Asn-25 and Asn-42.

Belongs to the glycoprotein hormones subunit beta family. In terms of assembly, heterodimer. The active follitropin is a heterodimer composed of an alpha chain/CGA shared with other hormones and a unique beta chain/FSHB shown here.

Its subcellular location is the secreted. In terms of biological role, together with the alpha chain CGA constitutes follitropin, the follicle-stimulating hormone, and provides its biological specificity to the hormone heterodimer. Binds FSHR, a G protein-coupled receptor, on target cells to activate downstream signaling pathways. Follitropin is involved in follicle development and spermatogenesis in reproductive organs. The chain is Follitropin subunit beta (FSHB) from Aotus nancymaae (Ma's night monkey).